The primary structure comprises 115 residues: NADH-ubiquinone oxidoreductase chain 3 (115 aa).

The next 3 helical transmembrane spans lie at L3 to W23, F55 to L75, and L84 to Y104.

The protein belongs to the complex I subunit 3 family. Core subunit of respiratory chain NADH dehydrogenase (Complex I) which is composed of 45 different subunits. Interacts with TMEM186. Interacts with TMEM242.

The protein resides in the mitochondrion inner membrane. It catalyses the reaction a ubiquinone + NADH + 5 H(+)(in) = a ubiquinol + NAD(+) + 4 H(+)(out). Core subunit of the mitochondrial membrane respiratory chain NADH dehydrogenase (Complex I) which catalyzes electron transfer from NADH through the respiratory chain, using ubiquinone as an electron acceptor. Essential for the catalytic activity of complex I. The protein is NADH-ubiquinone oxidoreductase chain 3 of Bos indicus (Zebu).